The primary structure comprises 218 residues: rRNA methyltransferase 2, mitochondrial (218 aa).

S-adenosyl-L-methionine is bound by residues 59-62 (PGSW), D80, 96-97 (DI), and D133. K173 serves as the catalytic Proton acceptor.

Belongs to the class I-like SAM-binding methyltransferase superfamily. RNA methyltransferase RlmE family.

It localises to the mitochondrion. It catalyses the reaction a uridine in 21S rRNA + S-adenosyl-L-methionine = a 2'-O-methyluridine in 21S rRNA + S-adenosyl-L-homocysteine + H(+). Its function is as follows. S-adenosyl-L-methionine-dependent 2'-O-ribose methyltransferase that catalyzes the formation of the 2'-O-methyluridine corresponding to position 2791 in S.cerevisiae 21S mitochondrial large subunit ribosomal RNA (mtLSU rRNA), a universally conserved modification in the peptidyl transferase domain of the mtLSU rRNA. This is rRNA methyltransferase 2, mitochondrial from Schizosaccharomyces pombe (strain 972 / ATCC 24843) (Fission yeast).